We begin with the raw amino-acid sequence, 100 residues long: Replication restart protein PriB (100 aa).

In terms of domain architecture, SSB spans 1–100 (MTNRMELSGT…VLHADNITQI (100 aa)).

Belongs to the PriB family. In terms of assembly, homodimer. Interacts with PriA and DnaT. Component of the replication restart primosome. Primosome assembly occurs via a 'hand-off' mechanism. PriA binds to replication forks, subsequently PriB then DnaT bind; DnaT then displaces ssDNA to generate the helicase loading substrate.

Functionally, involved in the restart of stalled replication forks, which reloads the replicative helicase on sites other than the origin of replication; the PriA-PriB pathway is the major replication restart pathway. During primosome assembly it facilitates complex formation between PriA and DnaT on DNA; stabilizes PriA on DNA. Stimulates the DNA unwinding activity of PriA helicase. The protein is Replication restart protein PriB of Vibrio parahaemolyticus serotype O3:K6 (strain RIMD 2210633).